We begin with the raw amino-acid sequence, 923 residues long: Neuropilin-1a (923 aa).

Residues 1–19 (MHCGLVLILFTGIFLIVSA) form the signal peptide. At 20–856 (LKNDKCGDNI…AGNMLKTLDP (837 aa)) the chain is on the extracellular side. 3 disulfides stabilise this stretch: Cys25/Cys52, Cys80/Cys102, and Cys145/Cys171. CUB domains follow at residues 25 to 139 (CGDN…YEIF) and 145 to 263 (CSRN…FTVL). N-linked (GlcNAc...) asparagine glycosylation occurs at Asn148. 3 residues coordinate Ca(2+): Glu193, Asp207, and Asp248. The cysteines at positions 204 and 226 are disulfide-linked. Asn259 is a glycosylation site (N-linked (GlcNAc...) asparagine). Disulfide bonds link Cys273–Cys422 and Cys429–Cys581. F5/8 type C domains follow at residues 273–422 (CTEP…VYGC) and 429–581 (CSGM…LLGC). Asn520 is a glycosylation site (N-linked (GlcNAc...) asparagine). The tract at residues 587-624 (TVPPTTPAASTTPSDECDDDQANCHSGTGDGYDQTGGT) is disordered. Residue Ser612 is glycosylated (O-linked (Xyl...) (chondroitin sulfate) serine; alternate). O-linked (Xyl...) (heparan sulfate) serine; alternate glycosylation occurs at Ser612. Residues 642–811 (FACDFGWAND…DNVNMADCKD (170 aa)) form the MAM domain. The chain crosses the membrane as a helical span at residues 857 to 877 (ILITIIAMSALGVFLGAICGV). Over 878 to 923 (VLYCACSHSGMSDRNLSALENYNFELVDGVKLKKDKLNSQNSYSEA) the chain is Cytoplasmic.

It belongs to the neuropilin family.

It is found in the membrane. In terms of biological role, receptor involved in the development of the cardiovascular system, in angiogenesis, in the formation of certain neuronal circuits and in organogenesis outside the nervous system. It mediates the chemorepulsant activity of semaphorins. Regulates angiogenesis through a VEGF-dependent pathway. The sequence is that of Neuropilin-1a (nrp1a) from Danio rerio (Zebrafish).